Here is a 309-residue protein sequence, read N- to C-terminus: NAD kinase (309 aa).

Residue aspartate 89 is the Proton acceptor of the active site. Residues 89 to 90 (DG), 163 to 164 (NE), histidine 174, arginine 191, aspartate 193, and 204 to 209 (TAYSLS) contribute to the NAD(+) site.

This sequence belongs to the NAD kinase family. It depends on a divalent metal cation as a cofactor.

The protein resides in the cytoplasm. The enzyme catalyses NAD(+) + ATP = ADP + NADP(+) + H(+). Involved in the regulation of the intracellular balance of NAD and NADP, and is a key enzyme in the biosynthesis of NADP. Catalyzes specifically the phosphorylation on 2'-hydroxyl of the adenosine moiety of NAD to yield NADP. This is NAD kinase from Shewanella piezotolerans (strain WP3 / JCM 13877).